A 340-amino-acid polypeptide reads, in one-letter code: L-threonine 3-dehydrogenase (340 aa).

A Zn(2+)-binding site is contributed by cysteine 38. Residues threonine 40 and histidine 43 each act as charge relay system in the active site. Zn(2+) contacts are provided by histidine 63, glutamate 64, cysteine 93, cysteine 96, cysteine 99, and cysteine 107. NAD(+)-binding positions include isoleucine 175, aspartate 195, arginine 200, leucine 261 to isoleucine 263, and isoleucine 285 to tyrosine 286.

The protein belongs to the zinc-containing alcohol dehydrogenase family. In terms of assembly, homotetramer. It depends on Zn(2+) as a cofactor.

It is found in the cytoplasm. The enzyme catalyses L-threonine + NAD(+) = (2S)-2-amino-3-oxobutanoate + NADH + H(+). Its pathway is amino-acid degradation; L-threonine degradation via oxydo-reductase pathway; glycine from L-threonine: step 1/2. Catalyzes the NAD(+)-dependent oxidation of L-threonine to 2-amino-3-ketobutyrate. The polypeptide is L-threonine 3-dehydrogenase (Xanthomonas oryzae pv. oryzae (strain MAFF 311018)).